The chain runs to 180 residues: MEEMKQKWTDMLTEFQEQAGLTDGSLLVIGCSTSEAAGSRIGTAGSGDWAELIYGGLNRFKEKTGVHLAFQCCEHLNRALVIEAETAERFRLPIVSAVPVPKAGGAMASYAYRQMRSPVLAESIQADAGIDIGDTFIGMHLKPVAVPVRISSRELGEAHVTMARTRPKLIGGIRAVYECE.

It belongs to the UPF0340 family.

This chain is UPF0340 protein RBAM_034070, found in Bacillus velezensis (strain DSM 23117 / BGSC 10A6 / LMG 26770 / FZB42) (Bacillus amyloliquefaciens subsp. plantarum).